An 89-amino-acid polypeptide reads, in one-letter code: Small ribosomal subunit protein uS17 (89 aa).

Belongs to the universal ribosomal protein uS17 family. Part of the 30S ribosomal subunit.

Functionally, one of the primary rRNA binding proteins, it binds specifically to the 5'-end of 16S ribosomal RNA. This chain is Small ribosomal subunit protein uS17, found in Lactiplantibacillus plantarum (strain ATCC BAA-793 / NCIMB 8826 / WCFS1) (Lactobacillus plantarum).